We begin with the raw amino-acid sequence, 665 residues long: Fructose-1,6-bisphosphatase class 3 (665 aa).

It belongs to the FBPase class 3 family. Requires Mn(2+) as cofactor.

It catalyses the reaction beta-D-fructose 1,6-bisphosphate + H2O = beta-D-fructose 6-phosphate + phosphate. It functions in the pathway carbohydrate biosynthesis; gluconeogenesis. This Clostridium novyi (strain NT) protein is Fructose-1,6-bisphosphatase class 3.